Here is a 207-residue protein sequence, read N- to C-terminus: Nudix hydrolase 4 (207 aa).

The Nudix hydrolase domain maps to 58–194 (GYRQVVGCVP…WMREALEAFI (137 aa)). The short motif at 101-122 (GGWETDESMEEAALRETIEEAG) is the Nudix box element. Mg(2+)-binding residues include E116 and E120.

This sequence belongs to the Nudix hydrolase family. It depends on Mg(2+) as a cofactor. Mn(2+) is required as a cofactor. As to expression, expressed in roots, stems and leaves.

The enzyme catalyses ADP-D-ribose + H2O = D-ribose 5-phosphate + AMP + 2 H(+). It catalyses the reaction NAD(+) + H2O = beta-nicotinamide D-ribonucleotide + AMP + 2 H(+). It carries out the reaction NADH + H2O = reduced beta-nicotinamide D-ribonucleotide + AMP + 2 H(+). In terms of biological role, probably mediates the hydrolysis of some nucleoside diphosphate derivatives. In vitro, it can use both NADH and ADP-ribose as substrates; however the relevance of such substrates in vivo is unclear. This is Nudix hydrolase 4 (NUDT4) from Arabidopsis thaliana (Mouse-ear cress).